A 512-amino-acid chain; its full sequence is GMP synthase [glutamine-hydrolyzing] (512 aa).

The 190-residue stretch at 6 to 195 (KIIILDFGSQ…VFNICGCQPK (190 aa)) folds into the Glutamine amidotransferase type-1 domain. Cys-83 serves as the catalytic Nucleophile. Residues His-169 and Glu-171 contribute to the active site. Residues 196–387 (WKITEFISAA…LGIDFKFVYK (192 aa)) enclose the GMPS ATP-PPase domain. 223–229 (SGGVDSS) serves as a coordination point for ATP.

As to quaternary structure, homodimer.

The enzyme catalyses XMP + L-glutamine + ATP + H2O = GMP + L-glutamate + AMP + diphosphate + 2 H(+). The protein operates within purine metabolism; GMP biosynthesis; GMP from XMP (L-Gln route): step 1/1. Its function is as follows. Catalyzes the synthesis of GMP from XMP. The protein is GMP synthase [glutamine-hydrolyzing] of Spiroplasma kunkelii.